Reading from the N-terminus, the 416-residue chain is Trifolitoxin-processing protein TfxD (416 aa).

The next 11 helical transmembrane spans lie at 24 to 44 (MIPN…ALQV), 48 to 68 (VLIT…LICM), 79 to 99 (VFAA…ALIA), 114 to 134 (IAFI…AYCA), 153 to 173 (SSLI…FAGT), 176 to 196 (SIIS…LAYA), 230 to 250 (ASFI…VVAA), 255 to 275 (IAVF…LAIG), 295 to 315 (VLIA…VGLI), 322 to 342 (IFAL…CDGL), and 372 to 392 (VILA…ALVL).

It localises to the cell membrane. Functionally, the actions of the proteins TfxB, TfxD and TfxF are implicated in the processing of the inactive trifolitoxin (TfxA) precursor into the active peptide. This is Trifolitoxin-processing protein TfxD (tfxD) from Rhizobium leguminosarum bv. trifolii.